A 136-amino-acid polypeptide reads, in one-letter code: Pleckstrin homology-like domain family A member 2 (136 aa).

The 94-residue stretch at 12 to 105 (ILKEGDLEKR…WNAEITLALV (94 aa)) folds into the PH domain.

This sequence belongs to the PHLDA2 family.

The protein resides in the cytoplasm. Its subcellular location is the membrane. In terms of biological role, plays a role in regulating placenta growth. May act via its PH domain that competes with other PH domain-containing proteins, thereby preventing their binding to membrane lipids. In Xenopus tropicalis (Western clawed frog), this protein is Pleckstrin homology-like domain family A member 2 (phlda2).